Reading from the N-terminus, the 326-residue chain is Malate dehydrogenase (326 aa).

Residue 12-18 (GGTGQIA) participates in NAD(+) binding. Positions 93 and 99 each coordinate substrate. NAD(+)-binding positions include Asn-106, Gln-113, and 130–132 (VGN). Asn-132 and Arg-163 together coordinate substrate. Catalysis depends on His-188, which acts as the Proton acceptor.

Belongs to the LDH/MDH superfamily. MDH type 2 family.

The catalysed reaction is (S)-malate + NAD(+) = oxaloacetate + NADH + H(+). Functionally, catalyzes the reversible oxidation of malate to oxaloacetate. The protein is Malate dehydrogenase of Chlamydia muridarum (strain MoPn / Nigg).